Consider the following 122-residue polypeptide: Large ribosomal subunit protein uL14c (122 aa).

It belongs to the universal ribosomal protein uL14 family. Part of the 50S ribosomal subunit.

The protein resides in the plastid. Its subcellular location is the chloroplast. Binds to 23S rRNA. This Capsella bursa-pastoris (Shepherd's purse) protein is Large ribosomal subunit protein uL14c.